The following is a 684-amino-acid chain: MPPRKRKLEELKNEQGEQGSYKCHLCGQCFYRGCGLASHLRRHAPVTFDCEHCAYTCKHKYAYDRHLLQSHPELVESGPLVRMFKNEDEDAPMPILEREADVSDDAVKYEALSSFSEPEPISYKCPLCISTFGSHARAVYHILSHRVKLYQAPKSLKFFSRKTMQALGGFRLESQLMIKWRLQYDNRSVDEKRTRLWRYMEENFGHEHLKQPKLESDNPSTSSSFESQTNLNDSSIIKKKLVMKCGTVFGQRLIHDNTQYYLCRNCPYVSWNVSSLWRHFRHHIQKSKQSWTCIACSYSSSSRVKIDLHVKMHKEMPEIDLEFATWLRYERRINKNDLNKPTNKKKKPDGGNGSNHSDMRSLHAFLSLKNSKNNVVKHDIDAPTLHPLSPAPKLVAMTQFDFGEIVTYKSVNPLHQINKNNSNPTVLPNKRNSIKTSKSDTQIALSVKQSSSMKMVKVSPGKVYQLPKTSKFYRPESPDSLASNNSAHGDEIESTSSDQFQQSVKVPKYEDFLNMKPVMPYFQKQRHPLEAIAMYEKAKREYEKNHCFPNLPIFEFNIEYKNLHPLAKAQYGKNNMKEYFLNEMEVEKSRECTDCPFKHNDLQQFRLHRDKHFYGGSHTCPECNYSSNNHNQVVEHTFVDHYLSDVRLVEGLPSSDSEDDNIPVPPDTPQRKKKAPKRGKRRGW.

5 consecutive C2H2-type zinc fingers follow at residues 21 to 43 (YKCHLCGQCFYRGCGLASHLRRH), 48 to 71 (FDCEHCAYTCKHKYAYDRHLLQSH), 123 to 145 (YKCPLCISTFGSHARAVYHILSH), 261 to 283 (YLCRNCPYVSWNVSSLWRHFRHH), and 291 to 313 (WTCIACSYSSSSRVKIDLHVKMH). Disordered regions lie at residues 337-359 (DLNKPTNKKKKPDGGNGSNHSDM), 419-440 (KNNSNPTVLPNKRNSIKTSKSD), and 469-501 (TSKFYRPESPDSLASNNSAHGDEIESTSSDQFQ). C2H2-type zinc fingers lie at residues 590-612 (RECTDCPFKHNDLQQFRLHRDKH) and 618-641 (HTCPECNYSSNNHNQVVEHTFVDH). Positions 652 to 684 (LPSSDSEDDNIPVPPDTPQRKKKAPKRGKRRGW) are disordered. Residues 671-684 (RKKKAPKRGKRRGW) are compositionally biased toward basic residues.

It localises to the nucleus. In terms of biological role, probable transcriptional regulator, which participates in the transcriptional repression of the presenilin protein hop-1. This is Suppressor of presenilin protein 3 (spr-3) from Caenorhabditis elegans.